Consider the following 168-residue polypeptide: Thiosulfate dehydrogenase [quinone] small subunit (168 aa).

A helical membrane pass occupies residues 6 to 26 (IIGIIFAILVVGWILATGQWA).

Heterodimer of a large and a small subunit in a 2:2 stoichiometry. TQO may associate with the terminal oxidase formed by doxBCE. Post-translationally, the N-terminus is blocked. In terms of processing, glycosylated.

It localises to the cell membrane. The catalysed reaction is 6-decylubiquinone + 2 thiosulfate = 6-decylubiquinol + tetrathionate. Inhibited by sulfite, metabisulfite and dithonite. Functionally, TQO plays a role in sulfur oxidation and is proposed to couple sulfur oxidation to dioxygen reduction; caldariellaquinone or sulfolobus quinone seem to serve to transfer electrons to the electron transport chain terminal oxidase formed by DoxBCE. In Acidianus ambivalens (Desulfurolobus ambivalens), this protein is Thiosulfate dehydrogenase [quinone] small subunit (doxA).